Here is a 569-residue protein sequence, read N- to C-terminus: MTTSWSDRLQNAADLPANMDGHALKKYRREAYHRVFVNRSLAMEKIKCFGFDMDYTLAVYKSPEYESLGFDLTVERLVSIGYPHELLNFVYDPAFPTRGLVFDTHYGNLLKVDAYGNLLVCAHGFNFLRGPETRDQYPNKFIQRDDTDRFYILNTLFNLPETYLLACLVDFFTNCDRYTSCETGFKDGDLFMSFRSMFQDVRDAVDWVHYKGSLKEKTLENLEKYVVKDGKLPLLLSRMNEVGKVFLVTNSDYKYTDKIMTYLFDFPHGPKPGSAHRPWQSYFDLILVDARKPLFFGEGTVLRQVDTVTGKLKIGTYTGPLQHGIVYSGGSSDTVCDLLGAKGKDILYIGDHIFGDILKSKKRQGWRTFLVIPELAQELHVWTDKSALFEELQSLDIFLAELYKHLDSSSNERPDISSIQRRIKKVTHDMDMCYGMMGSLFRSGSRQTLFASQVMRYADLYAASFINLLYYPFSYLFRAAHVLMPHESTVEHTHVDINEKESPMATRNRTSVDFKDSDYKRHQLTRSISEIKPPNLFPQAPQEITHCHDEDDDEEEEEEEVEEEEEEEE.

D52 functions as the Nucleophile in the catalytic mechanism. Residues D52 and D54 each coordinate IMP. 2 residues coordinate Mg(2+): D52 and D54. D54 functions as the Proton donor in the catalytic mechanism. Positions 144 and 154 each coordinate ATP. IMP-binding residues include R202, D206, K215, T249, N250, S251, and K292. Residue D351 coordinates Mg(2+). Positions 453 and 456 each coordinate ATP. Residues 527-569 form a disordered region; that stretch reads SISEIKPPNLFPQAPQEITHCHDEDDDEEEEEEEVEEEEEEEE. A required for tetramer assembly region spans residues 548–569; the sequence is HDEDDDEEEEEEEVEEEEEEEE. Residues 550 to 569 are compositionally biased toward acidic residues; sequence EDDDEEEEEEEVEEEEEEEE.

It belongs to the 5'(3')-deoxyribonucleotidase family. Homotetramer. The cofactor is Mg(2+).

It localises to the cytoplasm. The protein localises to the cytosol. It catalyses the reaction a ribonucleoside 5'-phosphate + H2O = a ribonucleoside + phosphate. The enzyme catalyses a 2'-deoxyribonucleoside + a ribonucleoside 5'-phosphate = a ribonucleoside + a 2'-deoxyribonucleoside 5'-phosphate. It carries out the reaction IMP + H2O = inosine + phosphate. The catalysed reaction is GMP + H2O = guanosine + phosphate. It catalyses the reaction dGMP + H2O = 2'-deoxyguanosine + phosphate. The enzyme catalyses dIMP + H2O = 2'-deoxyinosine + phosphate. It carries out the reaction XMP + H2O = xanthosine + phosphate. The catalysed reaction is inosine + GMP = guanosine + IMP. It catalyses the reaction dGMP + inosine = 2'-deoxyguanosine + IMP. The enzyme catalyses dIMP + inosine = 2'-deoxyinosine + IMP. It carries out the reaction inosine + UMP = uridine + IMP. The catalysed reaction is inosine + CMP = cytidine + IMP. It catalyses the reaction inosine + AMP = IMP + adenosine. With respect to regulation, allosterically activated by various compounds including ATP, 2,3-BPG/2,3-Bisphosphoglyceric acid and Ap4A/P1,P4-bis(5'-adenosyl) tetraphosphate. Binding of an allosteric activator is a prerequisiste to magnesium and substrate binding. Inhibited by inorganic phosphate. Inhibited by inosine, guanosine, p-chloromercuribenzoate and NaF. Broad specificity cytosolic 5'-nucleotidase that catalyzes the dephosphorylation of 6-hydroxypurine nucleoside 5'-monophosphates. In addition, possesses a phosphotransferase activity by which it can transfer a phosphate from a donor nucleoside monophosphate to an acceptor nucleoside, preferably inosine, deoxyinosine and guanosine. Has the highest activities for IMP and GMP followed by dIMP, dGMP and XMP. Could also catalyze the transfer of phosphates from pyrimidine monophosphates but with lower efficiency. Through these activities regulates the purine nucleoside/nucleotide pools within the cell. This chain is Cytosolic purine 5'-nucleotidase (NT5C2), found in Gallus gallus (Chicken).